A 420-amino-acid chain; its full sequence is Transcriptional adapter 2-beta (420 aa).

The ZZ-type zinc-finger motif lies at 4 to 59; that stretch reads LGKKYCVYCLAEVSPLRFRCTECQDIELCPECFSAGAEIGHHRRYHGYQLVDGGRF. Zn(2+) contacts are provided by cysteine 9, cysteine 12, cysteine 23, cysteine 26, cysteine 32, cysteine 35, histidine 45, and histidine 49. Positions 65–118 constitute an SANT domain; it reads EAEGGWTSREEQLLLDAIEQFGFGNWEDMAAHVGASRTPQEVMEHYVSMYIHGN. Residues 305-335 are disordered; that stretch reads SAEYEAARHKREKRKENKNLAGSKRGKEDGK.

Interacts with GCN5L2, SMARCA4, SMARCE1 and PAX5. Component of the TFTC-HAT complex.

It localises to the nucleus. Coactivates PAX5-dependent transcription together with either SMARCA4 or GCN5L2. In Homo sapiens (Human), this protein is Transcriptional adapter 2-beta (TADA2B).